The chain runs to 541 residues: CTP synthase (541 aa).

Residues 1–268 form an amidoligase domain region; it reads MAKFIFITGG…AEIVCRRLGL (268 aa). Ser-13 contributes to the CTP binding site. A UTP-binding site is contributed by Ser-13. ATP-binding positions include 14–19 and Asp-71; that span reads GLGKGI. Asp-71 and Glu-141 together coordinate Mg(2+). CTP contacts are provided by residues 148–150, 189–194, and Lys-225; these read DIE and KTKPTQ. Residues 189 to 194 and Lys-225 each bind UTP; that span reads KTKPTQ. A Glutamine amidotransferase type-1 domain is found at 293–539; it reads EIALVGKYVA…IKAALEYRAG (247 aa). Gly-359 provides a ligand contact to L-glutamine. Cys-386 functions as the Nucleophile; for glutamine hydrolysis in the catalytic mechanism. L-glutamine-binding positions include 387–390, Glu-410, and Arg-467; that span reads MGMQ. Active-site residues include His-512 and Glu-514.

It belongs to the CTP synthase family. As to quaternary structure, homotetramer.

The catalysed reaction is UTP + L-glutamine + ATP + H2O = CTP + L-glutamate + ADP + phosphate + 2 H(+). It carries out the reaction L-glutamine + H2O = L-glutamate + NH4(+). It catalyses the reaction UTP + NH4(+) + ATP = CTP + ADP + phosphate + 2 H(+). It functions in the pathway pyrimidine metabolism; CTP biosynthesis via de novo pathway; CTP from UDP: step 2/2. Its activity is regulated as follows. Allosterically activated by GTP, when glutamine is the substrate; GTP has no effect on the reaction when ammonia is the substrate. The allosteric effector GTP functions by stabilizing the protein conformation that binds the tetrahedral intermediate(s) formed during glutamine hydrolysis. Inhibited by the product CTP, via allosteric rather than competitive inhibition. In terms of biological role, catalyzes the ATP-dependent amination of UTP to CTP with either L-glutamine or ammonia as the source of nitrogen. Regulates intracellular CTP levels through interactions with the four ribonucleotide triphosphates. This chain is CTP synthase, found in Symbiobacterium thermophilum (strain DSM 24528 / JCM 14929 / IAM 14863 / T).